A 100-amino-acid polypeptide reads, in one-letter code: NADH-quinone oxidoreductase subunit K (100 aa).

3 consecutive transmembrane segments (helical) span residues 4 to 24, 29 to 49, and 61 to 81; these read TSYY…GVLL, IVIF…LVAF, and IVFF…ALLV.

This sequence belongs to the complex I subunit 4L family. NDH-1 is composed of 14 different subunits. Subunits NuoA, H, J, K, L, M, N constitute the membrane sector of the complex.

The protein localises to the cell membrane. The enzyme catalyses a quinone + NADH + 5 H(+)(in) = a quinol + NAD(+) + 4 H(+)(out). NDH-1 shuttles electrons from NADH, via FMN and iron-sulfur (Fe-S) centers, to quinones in the respiratory chain. The immediate electron acceptor for the enzyme in this species is believed to be ubiquinone. Couples the redox reaction to proton translocation (for every two electrons transferred, four hydrogen ions are translocated across the cytoplasmic membrane), and thus conserves the redox energy in a proton gradient. This chain is NADH-quinone oxidoreductase subunit K, found in Chloroflexus aggregans (strain MD-66 / DSM 9485).